Reading from the N-terminus, the 541-residue chain is Glutamyl-tRNA(Gln) amidotransferase subunit B, mitochondrial (541 aa).

Belongs to the GatB/GatE family. GatB subfamily. Subunit of the heterotrimeric GatFAB amidotransferase (AdT) complex, composed of A, B and F subunits.

The protein localises to the mitochondrion. It catalyses the reaction L-glutamyl-tRNA(Gln) + L-glutamine + ATP + H2O = L-glutaminyl-tRNA(Gln) + L-glutamate + ADP + phosphate + H(+). Functionally, allows the formation of correctly charged Gln-tRNA(Gln) through the transamidation of misacylated Glu-tRNA(Gln) in the mitochondria. The reaction takes place in the presence of glutamine and ATP through an activated gamma-phospho-Glu-tRNA(Gln). The polypeptide is Glutamyl-tRNA(Gln) amidotransferase subunit B, mitochondrial (Saccharomyces cerevisiae (strain YJM789) (Baker's yeast)).